The primary structure comprises 21 residues: Fibrinogen beta chain (21 aa).

A Pyrrolidone carboxylic acid modification is found at Gln1. The span at 1 to 11 (QHSTDYDEVED) shows a compositional bias: acidic residues. Residues 1–21 (QHSTDYDEVEDDRAKLHLDAR) form a disordered region. The O-linked (GalNAc...) threonine glycan is linked to Thr4. Tyr6 is modified (sulfotyrosine). Over residues 12 to 21 (DRAKLHLDAR) the composition is skewed to basic and acidic residues.

Heterohexamer; disulfide linked. Contains 2 sets of 3 non-identical chains (alpha, beta and gamma). The 2 heterotrimers are in head to head conformation with the N-termini in a small central domain. Post-translationally, conversion of fibrinogen to fibrin is triggered by thrombin, which cleaves fibrinopeptides A and B from alpha and beta chains, and thus exposes the N-terminal polymerization sites responsible for the formation of the soft clot.

Its subcellular location is the secreted. Cleaved by the protease thrombin to yield monomers which, together with fibrinogen alpha (FGA) and fibrinogen gamma (FGG), polymerize to form an insoluble fibrin matrix. Fibrin has a major function in hemostasis as one of the primary components of blood clots. In addition, functions during the early stages of wound repair to stabilize the lesion and guide cell migration during re-epithelialization. Was originally thought to be essential for platelet aggregation, based on in vitro studies using anticoagulated blood. However subsequent studies have shown that it is not absolutely required for thrombus formation in vivo. Enhances expression of SELP in activated platelets. Maternal fibrinogen is essential for successful pregnancy. Fibrin deposition is also associated with infection, where it protects against IFNG-mediated hemorrhage. May also facilitate the antibacterial immune response via both innate and T-cell mediated pathways. The sequence is that of Fibrinogen beta chain (FGB) from Muntiacus muntjak (Barking deer).